The primary structure comprises 1402 residues: DNA-directed RNA polymerase subunit beta' (1402 aa).

Positions 71, 73, 86, and 89 each coordinate Zn(2+). The Mg(2+) site is built by Asp462, Asp464, and Asp466. Positions 808, 881, 888, and 891 each coordinate Zn(2+).

This sequence belongs to the RNA polymerase beta' chain family. The RNAP catalytic core consists of 2 alpha, 1 beta, 1 beta' and 1 omega subunit. When a sigma factor is associated with the core the holoenzyme is formed, which can initiate transcription. Mg(2+) is required as a cofactor. Requires Zn(2+) as cofactor.

The catalysed reaction is RNA(n) + a ribonucleoside 5'-triphosphate = RNA(n+1) + diphosphate. Functionally, DNA-dependent RNA polymerase catalyzes the transcription of DNA into RNA using the four ribonucleoside triphosphates as substrates. The protein is DNA-directed RNA polymerase subunit beta' of Hyphomonas neptunium (strain ATCC 15444).